Consider the following 132-residue polypeptide: MKKNGILNKELNTLLASLGHTDTIVIADCGLPIPNEEARIDLALVKGFPPFLSVLDAVINELVVEEIVLAEEIKTQNPDVYESIKARMSDVPIQFVRHEEFKEMTKQAKAVIRTGEATPYANIILRSGVNFS.

The Proton donor role is filled by histidine 20. Substrate-binding positions include aspartate 28, histidine 98, and 120 to 122; that span reads YAN.

This sequence belongs to the RbsD / FucU family. RbsD subfamily. Homodecamer.

The protein localises to the cytoplasm. The enzyme catalyses beta-D-ribopyranose = beta-D-ribofuranose. The protein operates within carbohydrate metabolism; D-ribose degradation; D-ribose 5-phosphate from beta-D-ribopyranose: step 1/2. In terms of biological role, catalyzes the interconversion of beta-pyran and beta-furan forms of D-ribose. The polypeptide is D-ribose pyranase (Geobacillus thermodenitrificans (strain NG80-2)).